Reading from the N-terminus, the 766-residue chain is MAQWNQLQQLDTRYLEQLHQLYSDSFPMELRQFLAPWIESQDWAFAASKESHATLVFHNLLGEIDQQYSRFLQESNVLYQHNLRRIKQFLQSTYLEKPMEIARIVARCLWEEGRLLQTAVAAAQQGGPASHPNAAVITEKQQMLEQHLQDVRKKVQDLEQKMKVVENLQDDFDFNYKTLKSQSDLSELNGNNQSVTRQKMQQLEQMLTALDQLRRTIISDLASLLSAMEYVQKNLTDEELADWKRRQQIACIGGPPNICLDRLENWITSLAESQLQTRQQIRKLEELQQKVSYKGDPIVQHRPMLEERIVELFRNLMKSAFVVERQPCMPMHPDRPLVIKTGVQFTNKVRLLVKFPELNYQLKIKVCIDKDSGEGAALRGSRKFNILGTNTKVMNMEESNNGSLSAEFKHLTLREQRCGNGGRANCDASLIVTEELHLITFETEVYHQGLKIDLETHSLPVVVISNICQMPNAWASILWYNMLTNNPKNVNFFTKPPIGTWDQVAEVLSWQFSSTTKRGLSIEQLTTLAEKLLGPGVNYSGCQITWAKFCKENMAGKGFSFWVWLDNLIDLVKKYMLALWNEGYIIGFISKERERALLSPKPPGTFLLRFSESSKEGGITFTWVEKDISGKTQIQSVEPYTKQQLNSMSFAEIIMGYKIMDATNILVSPLVYLYPDIPKEEAFGKYCRPESQEHQEPTDPGTAPYLRTMFICVTPTTCTLDLPMSPGTFDSVMQFPGEGSESGNGNQFETLTFDVDLPSECAASPM.

Positions 150 to 162 (DVRKKVQDLEQKM) match the Essential for nuclear import motif. In terms of domain architecture, SH2 spans 580-670 (WNEGYIIGFI…DATNILVSPL (91 aa)). A Phosphoserine; by NLK modification is found at serine 725.

It belongs to the transcription factor STAT family. In terms of assembly, forms a homodimer or a heterodimer with a related family member. Interacts with nlk.2. Phosphorylation of both tyrosine and serine residues, together with dimerization, is required for mesoderm induction.

Its subcellular location is the cytoplasm. The protein resides in the nucleus. Its function is as follows. Transcription factor that binds to target promoter sequences and activates transcription upon il6st/gp130 stimulation. Mediates ventralization of embryos, at least in part via inhibition of smad2 signaling. Required for hairy2 to induce dll1/delta1 and promote neural crest cell proliferation and differentiation. Involved in TGFbeta-mediated mesoderm induction in early embryos, acting downstream of map3k7/tak1 and nlk.2. This chain is Signal transducer and activator of transcription 3.2 (stat3.2), found in Xenopus laevis (African clawed frog).